A 1247-amino-acid polypeptide reads, in one-letter code: MRSRSNSGVRLDYYQRIVHRLILAHQEPVTGLFPASNVNSHAWIRDNVYCILAVWGLSMAYKKIADQDEDRAKCYELEQSCVKLMRGLLMAMMNQKDKVEKFKMTQSPYDSLHAKYSSKNGLPVVDDNEWGHLQIDAVSLYLLILAQMTASGLQIVFSLDEVSFIQNLVFYIESAYSIPDYGIWERGDKTNHGEPELNASSIGMAKAALEAMNELDLFGARGGPASVIHVLADEAHKCQAVLQSMLPRESNSKELDSGLLCVIGFPAFAVDDAQLIHNTKDAILSRLQGKYGCKRFLRDGYRTPKEDPSRLYYERWELRMFENIECEWPLFYCYLILFHAFQSDKRAVEEYASRLEKIMVRSEDGILLVPESYAVPQDLVGFEYQKPGSQVREVVGRCPFLWGQSLFILGRLLQEGFLAVGELDPLNRRLGAQKKPDVVVQVVIIAEDNEIRDKLAEHDLHVQTIAEVAPIEVQPARVLSHLYTYLGRNRKLGLSGRKSRDVGILSTSKLYSLKDRIFAFTPQFADLSRFYIASDNELMIDILKGEINFLKSAWDLLGRPLVTLVLKRIHLDQDKIPLAMIQTMRKLKSGYINGTRVMLGSLKDFLNTSAITDLSFLGSTEDGYPDRLHPDVQTYLDEHLLRSFSNRSTMNLRGGQLRPRTLRRRMSCKGAIKKTRSINVDSDNLGMEGPSPLTERRLSSIVPPPWLQANKQSHVSVFATTPEEGPTSSPLSLGNDLIRENIYPVDPHHSRSAIDRRSEFVRQQEMPKILIQRHRAETNFADTEVEELIAMLRETENLEEQGDILQYLVDTQGLDFNTAGLGFKNKSEENATPNANNAGMLEEGRVVTVRDLLKGLYEKACQQKLWGLVRHTAGMLGKRVEDLAKAVTDLLVRQKQVTVGMPPNNEHTITAPLPEVELRQLIHDAYGDDESTAMLTQELMVYLAMFIRTEPQLFHEMLRLRVGLIIQVMAKELSRTLNCDGEAASEHLLNLSPFEMKNLLYHILSGKEFAVSSVARGNLSIVSCKSSRVSKKSQIGLGDPEGEDALIATIDDRQGQWLRRRRLDGALNRVPRDFYSRVWTVLEKCQGLAIEGRVLQQSLTQEMTPGELKFALEVETALNQIPQPEYRQLVVEALMVLTLVTEHNMVPSLGGVIYVEHLVHKANQLFLEDQRKVQGDATLCCAKIKDGKEQQQAASGMLLCGGAAYICQHLYDSAPSGSYGTMTYMSRAVALVLDCVPKHGEMECAIS.

A calmodulin-binding region spans residues 853 to 883; sequence LKGLYEKACQQKLWGLVRHTAGMLGKRVEDL. A phosphoserine mark is found at Ser1030 and Ser1033. The tract at residues 1052–1089 is calmodulin-binding; the sequence is DRQGQWLRRRRLDGALNRVPRDFYSRVWTVLEKCQGLA. Residue Cys1244 is the site of S-farnesyl cysteine attachment.

The protein belongs to the phosphorylase b kinase regulatory chain family. Although the final Cys may be farnesylated, the terminal tripeptide is probably not removed, and the C-terminus is not methylated.

It is found in the cell membrane. Its pathway is glycan biosynthesis; glycogen metabolism. Phosphorylase b kinase catalyzes the phosphorylation of serine in certain substrates, including troponin I. The alpha chain may bind calmodulin. This Drosophila melanogaster (Fruit fly) protein is Probable phosphorylase b kinase regulatory subunit alpha.